The sequence spans 562 residues: NAD-dependent malic enzyme (562 aa).

Catalysis depends on Tyr101, which acts as the Proton donor. NAD(+) is bound at residue Arg154. Lys172 functions as the Proton acceptor in the catalytic mechanism. Residues Glu243, Asp244, and Asp267 each contribute to the a divalent metal cation site. Asp267 and Asn415 together coordinate NAD(+).

This sequence belongs to the malic enzymes family. Homotetramer. Mg(2+) is required as a cofactor. Mn(2+) serves as cofactor.

The catalysed reaction is (S)-malate + NAD(+) = pyruvate + CO2 + NADH. It catalyses the reaction oxaloacetate + H(+) = pyruvate + CO2. The chain is NAD-dependent malic enzyme from Shewanella halifaxensis (strain HAW-EB4).